Consider the following 803-residue polypeptide: Translation initiation factor IF-2 (803 aa).

Disordered stretches follow at residues 95-125 (PVVE…EKAE) and 138-178 (EVKE…EREE). Positions 111–121 (VPLTSDTTNLN) are enriched in polar residues. Residues 138-155 (EVKEEAKKTPSEKKETPK) are compositionally biased toward basic and acidic residues. The span at 156-167 (KGPRKETRRSRK) shows a compositional bias: basic residues. Positions 168–178 (PDKEDKWEREE) are enriched in basic and acidic residues. One can recognise a tr-type G domain in the interval 302 to 471 (PRAPVVTIMG…LLQAEVLELK (170 aa)). The segment at 311-318 (GHVDHGKT) is G1. 311–318 (GHVDHGKT) provides a ligand contact to GTP. The interval 336-340 (GITQH) is G2. Residues 357-360 (DTPG) form a G3 region. GTP-binding positions include 357–361 (DTPGH) and 411–414 (NKID). The interval 411-414 (NKID) is G4. The tract at residues 447–449 (SAK) is G5.

The protein belongs to the TRAFAC class translation factor GTPase superfamily. Classic translation factor GTPase family. IF-2 subfamily.

It localises to the cytoplasm. Its function is as follows. One of the essential components for the initiation of protein synthesis. Protects formylmethionyl-tRNA from spontaneous hydrolysis and promotes its binding to the 30S ribosomal subunits. Also involved in the hydrolysis of GTP during the formation of the 70S ribosomal complex. In Coxiella burnetii (strain Dugway 5J108-111), this protein is Translation initiation factor IF-2.